A 525-amino-acid chain; its full sequence is METIIIALIAFIIGIIAIPIVLFAWIYIKDEKQQEHSILRNYPVIGRFRYILEKIGPELRQYLYSNDNEEQPFSRKEYEQTVISGKYKSRMMGFGSVRDFDKPGYYIRNAMFPKQREEMHVNQTPKIETQIYKMDADNLFKRKEHAEHIKADPYFLHPDDVQVIGEHTCEKPFYVKGLVGQSAMSYGSLGERAVTALSKGLHLAGGTWMNTGEGGLSEYHLKGGADIICQIGPGLFGVRKRNGEFSWEEFKRKSRIDQIKAFELKLAQGAKTRGGHVDGAKVSEEVADIRNVEPGKSIDSPNRFYEFSNPPEMLDFIEKLRDVGQKPVGIKLVAGHPEELHELFSHMQKSGKHPDFITIDGSEGGTGASFYELADTVGLPIMTALPIVDTLLKQYGLRSQLKIFASGKLLTPDKIAVALALGADFVNIARGMMFSVGCIRALVCHTNTCPAGVATTDPKLQKALSVEEKQHRVCNYVISLREGLFNLAAAAGINSPIHFSKEHVVYRKEDGSIINIDNLIHQFVS.

Residues 4–24 (IIIALIAFIIGIIAIPIVLFA) traverse the membrane as a helical segment.

The protein belongs to the glutamate synthase family.

It is found in the cell membrane. The sequence is that of Glutamate synthase large subunit-like protein YerD (yerD) from Bacillus subtilis (strain 168).